The chain runs to 203 residues: Glutathione S-transferase 2 (203 aa).

A GST N-terminal domain is found at 1–78; sequence MPKVVFHYFG…YLGRKYGLAG (78 aa). Glutathione is bound by residues Tyr-8, Trp-38, Lys-42, 48-50, and 62-63; these read GQM and QS. The GST C-terminal domain occupies 80 to 203; sequence DIEEDFEIDQ…YLDSAPKKEF (124 aa).

It belongs to the GST superfamily. Sigma family. As to quaternary structure, homodimer.

It carries out the reaction RX + glutathione = an S-substituted glutathione + a halide anion + H(+). Its function is as follows. Conjugation of reduced glutathione to a wide number of exogenous and endogenous hydrophobic electrophiles. In Manduca sexta (Tobacco hawkmoth), this protein is Glutathione S-transferase 2 (GST2).